Reading from the N-terminus, the 923-residue chain is Alanine--tRNA ligase (923 aa).

4 residues coordinate Zn(2+): His611, His615, Cys714, and His718. A compositionally biased stretch (gly residues) spans 886-903; sequence VGGGGGGRPNMARGGGTD. The tract at residues 886–909 is disordered; that stretch reads VGGGGGGRPNMARGGGTDPSGMDN.

It belongs to the class-II aminoacyl-tRNA synthetase family. It depends on Zn(2+) as a cofactor.

It localises to the cytoplasm. The catalysed reaction is tRNA(Ala) + L-alanine + ATP = L-alanyl-tRNA(Ala) + AMP + diphosphate. Catalyzes the attachment of alanine to tRNA(Ala) in a two-step reaction: alanine is first activated by ATP to form Ala-AMP and then transferred to the acceptor end of tRNA(Ala). Also edits incorrectly charged Ser-tRNA(Ala) and Gly-tRNA(Ala) via its editing domain. The protein is Alanine--tRNA ligase of Methanococcoides burtonii (strain DSM 6242 / NBRC 107633 / OCM 468 / ACE-M).